The chain runs to 222 residues: Probable GTP-binding protein EngB (222 aa).

The EngB-type G domain maps to 27–202; it reads TGIEVAFAGR…AKKLDEWFLG (176 aa). Residues 35-42, 61-65, 81-84, 148-151, and 181-183 contribute to the GTP site; these read GRSNAGKS, GRTQL, DLPG, TKAD, and FSS. Residues Ser-42 and Thr-63 each contribute to the Mg(2+) site.

This sequence belongs to the TRAFAC class TrmE-Era-EngA-EngB-Septin-like GTPase superfamily. EngB GTPase family. Requires Mg(2+) as cofactor.

In terms of biological role, necessary for normal cell division and for the maintenance of normal septation. The protein is Probable GTP-binding protein EngB of Pseudoalteromonas translucida (strain TAC 125).